Reading from the N-terminus, the 51-residue chain is Insulin-1 (51 aa).

3 cysteine pairs are disulfide-bonded: C8–C37, C20–C50, and C36–C41.

This sequence belongs to the insulin family. As to quaternary structure, heterodimer of a B chain and an A chain linked by two disulfide bonds.

The protein resides in the secreted. Functionally, insulin decreases blood glucose concentration. It increases cell permeability to monosaccharides, amino acids and fatty acids. It accelerates glycolysis, the pentose phosphate cycle, and glycogen synthesis in liver. The polypeptide is Insulin-1 (ins1) (Batrachoididae sp. (Toadfish)).